The primary structure comprises 910 residues: DNA repair and recombination protein RAD54B (910 aa).

Positions 1 to 14 (MRRSAAPSQLQGNS) are enriched in polar residues. Residues 1–33 (MRRSAAPSQLQGNSFKKPKFIPPGRSNPGLNEE) form a disordered region. Serine 14 is subject to Phosphoserine. One can recognise a Helicase ATP-binding domain in the interval 313-480 (GMRMNGRCGA…FALIDFVNPG (168 aa)). 326-333 (DEMGLGKT) serves as a coordination point for ATP. The short motif at 431–434 (DEGH) is the DEGH box element. Residues 649-810 (KLLAVIHELR…HIQFSVEELK (162 aa)) enclose the Helicase C-terminal domain.

This sequence belongs to the SNF2/RAD54 helicase family. In terms of assembly, interacts with RAD51 through the NH2-terminal domain. Immunoprecipitation experiments show that the interaction is constitutive and not induced by ionizing radiation. The interaction may be indirect. In terms of tissue distribution, abundantly expressed in testis and spleen. Relatively low levels observed in thymus, prostate, ovary and colon.

It is found in the nucleus. Involved in DNA repair and mitotic recombination. May play an active role in recombination processes in concert with other members of the RAD52 epistasis group. The sequence is that of DNA repair and recombination protein RAD54B (RAD54B) from Homo sapiens (Human).